Here is a 556-residue protein sequence, read N- to C-terminus: Formate--tetrahydrofolate ligase 1 (556 aa).

An ATP-binding site is contributed by 65-72; it reads TPAGEGKS.

It belongs to the formate--tetrahydrofolate ligase family.

It carries out the reaction (6S)-5,6,7,8-tetrahydrofolate + formate + ATP = (6R)-10-formyltetrahydrofolate + ADP + phosphate. Its pathway is one-carbon metabolism; tetrahydrofolate interconversion. The protein is Formate--tetrahydrofolate ligase 1 of Streptococcus pyogenes serotype M1.